The sequence spans 379 residues: MSEFLPFSRPAMGSEELAAVEEVLRSGWITTGPKNQQLEQAFCRLTGNRHAIAVCSATAGMHVALMALGIGPGDEVITPSLTWVSTLNMIALLGATPVMIDVDRDTLMVTPELIEAAITERTRAIVPVHYAGAPADIDAVHALGKRHGIAVIDDAAHAAGTYYRGRHVGESGTAIFSFHAIKNMSCAEGGMIVTDDDALADRMRSLKFHGLGVDAFDRQTHGRAPQAEVLTPGYKYNLADINAAIALVQLDKLAAHNARREQIAQRYLSELADTPFLPLARPAWPHQHAWHLFILRVDRESCGLSRDELMQQLKEQGIGTGLHFRAAHTQKYYRDRFPQLSLPETEWNSERICSIPLFPGMSDGDCDRVIAALRTLAER.

N6-(pyridoxal phosphate)lysine is present on lysine 182.

It belongs to the DegT/DnrJ/EryC1 family. ArnB subfamily. Homodimer. The cofactor is pyridoxal 5'-phosphate.

It catalyses the reaction UDP-4-amino-4-deoxy-beta-L-arabinose + 2-oxoglutarate = UDP-beta-L-threo-pentopyranos-4-ulose + L-glutamate. It functions in the pathway nucleotide-sugar biosynthesis; UDP-4-deoxy-4-formamido-beta-L-arabinose biosynthesis; UDP-4-deoxy-4-formamido-beta-L-arabinose from UDP-alpha-D-glucuronate: step 2/3. It participates in bacterial outer membrane biogenesis; lipopolysaccharide biosynthesis. Catalyzes the conversion of UDP-4-keto-arabinose (UDP-Ara4O) to UDP-4-amino-4-deoxy-L-arabinose (UDP-L-Ara4N). The modified arabinose is attached to lipid A and is required for resistance to polymyxin and cationic antimicrobial peptides. The polypeptide is UDP-4-amino-4-deoxy-L-arabinose--oxoglutarate aminotransferase (Erwinia tasmaniensis (strain DSM 17950 / CFBP 7177 / CIP 109463 / NCPPB 4357 / Et1/99)).